The following is a 609-amino-acid chain: Membrane protein insertase YidC (609 aa).

5 helical membrane passes run 8 to 28, 381 to 401, 451 to 471, 509 to 529, and 545 to 565; these read LILA…LFPP, MGWS…PLAL, LPIL…FVTI, SLTA…SMWL, and IFAW…SGLV.

The protein belongs to the OXA1/ALB3/YidC family. Type 1 subfamily. Interacts with the Sec translocase complex via SecD. Specifically interacts with transmembrane segments of nascent integral membrane proteins during membrane integration.

It localises to the cell inner membrane. Required for the insertion and/or proper folding and/or complex formation of integral membrane proteins into the membrane. Involved in integration of membrane proteins that insert both dependently and independently of the Sec translocase complex, as well as at least some lipoproteins. Aids folding of multispanning membrane proteins. This chain is Membrane protein insertase YidC, found in Ruegeria pomeroyi (strain ATCC 700808 / DSM 15171 / DSS-3) (Silicibacter pomeroyi).